The following is a 101-amino-acid chain: NADH-quinone oxidoreductase subunit K (101 aa).

The next 3 membrane-spanning stretches (helical) occupy residues 4–24 (LGYFLIIGAILFGLGFAGIII), 30–50 (IVLLMCIELMLLAVNTNFIAF), and 61–81 (IFVFFILTVAAAESAIGLAIL).

This sequence belongs to the complex I subunit 4L family. NDH-1 is composed of 14 different subunits. Subunits NuoA, H, J, K, L, M, N constitute the membrane sector of the complex.

It localises to the cell inner membrane. It carries out the reaction a quinone + NADH + 5 H(+)(in) = a quinol + NAD(+) + 4 H(+)(out). Its function is as follows. NDH-1 shuttles electrons from NADH, via FMN and iron-sulfur (Fe-S) centers, to quinones in the respiratory chain. The immediate electron acceptor for the enzyme in this species is believed to be ubiquinone. Couples the redox reaction to proton translocation (for every two electrons transferred, four hydrogen ions are translocated across the cytoplasmic membrane), and thus conserves the redox energy in a proton gradient. The polypeptide is NADH-quinone oxidoreductase subunit K (Coxiella burnetii (strain CbuG_Q212) (Coxiella burnetii (strain Q212))).